We begin with the raw amino-acid sequence, 341 residues long: B3 domain-containing transcription factor VRN1 (341 aa).

Residues 5–98 (FFHKLIFSST…AFSVYIFNLS (94 aa)) constitute a DNA-binding region (TF-B3 1). The segment at 166 to 223 (GPVKAEEPTPTPKIPKKRGRKKKNADPEEINSSAPRDDDPENRSKFYESASARKRTVT) is disordered. Over residues 179–188 (IPKKRGRKKK) the composition is skewed to basic residues. Residues 200–211 (PRDDDPENRSKF) show a composition bias toward basic and acidic residues. A DNA-binding region (TF-B3 2) is located at residues 244–338 (FRVVLRPSYL…VLKVTAFRVN (95 aa)).

Expressed in roots and at lower levels in aerial parts.

Its subcellular location is the nucleus. In terms of biological role, essential protein. Involved in the regulation of vernalization. Acts as a transcriptional repressor of FLC, a major target of the vernalization pathway. Binds DNA in vitro in a non-sequence-specific manner. In Arabidopsis thaliana (Mouse-ear cress), this protein is B3 domain-containing transcription factor VRN1.